The following is a 358-amino-acid chain: Putative myc-like protein MYCLP1 (358 aa).

Disordered stretches follow at residues 150-171 and 219-245; these read ACSR…TVKK and QEGA…DKED. Basic and acidic residues predominate over residues 227 to 242; that stretch reads PPKEALEREAPGGKDD. The bHLH domain occupies 274-326; the sequence is WTKKKYHSYLERKRRNDQRSRFLALRDEVPALASCSRVSKVMILVKATEYLHE.

Efficient DNA binding requires dimerization with another bHLH protein. Binds DNA as a heterodimer with MAX. As to expression, detected in adult testis.

Its subcellular location is the nucleus. This Homo sapiens (Human) protein is Putative myc-like protein MYCLP1 (MYCLP1).